A 119-amino-acid chain; its full sequence is MGRQNVVVVFGLVFLAVLGLAAAASSPSPSASPSKAPSTSTPEVEAPVSEDTIGTTDDDAAASPGDDDVAVAGPLGSDSSYGSNGPSGSADSADSGAAALGVSAVVVGVTSIVGSFLFF.

An N-terminal signal peptide occupies residues 1 to 23; sequence MGRQNVVVVFGLVFLAVLGLAAA. The span at 24-42 shows a compositional bias: low complexity; that stretch reads ASSPSPSASPSKAPSTSTP. The disordered stretch occupies residues 24 to 95; sequence ASSPSPSASP…PSGSADSADS (72 aa). Topologically, residues 24-98 are extracellular; that stretch reads ASSPSPSASP…SADSADSGAA (75 aa). Residues 56–69 are compositionally biased toward acidic residues; the sequence is TDDDAAASPGDDDV. The span at 82-95 shows a compositional bias: low complexity; the sequence is GSNGPSGSADSADS. A helical transmembrane segment spans residues 99-118; that stretch reads ALGVSAVVVGVTSIVGSFLF. Residue F119 is a topological domain, cytoplasmic.

As to expression, expressed in mature pollen grains, developing microspores and tapetal cells.

It is found in the membrane. Required for pollen fertility and development. Active in both diploid tapetum and haploid microspores. Major pollen protein. This is Anther-specific protein BCP1 (BCP1) from Brassica campestris (Field mustard).